The following is a 215-amino-acid chain: ATP-dependent dethiobiotin synthetase BioD (215 aa).

13 to 18 contributes to the ATP binding site; it reads DIGKTV. T17 provides a ligand contact to Mg(2+). Residue K38 is part of the active site. T42 serves as a coordination point for substrate. Residues D50, 115–118, and 175–176 contribute to the ATP site; these read EGAG and NH. Residues D50 and E115 each contribute to the Mg(2+) site.

It belongs to the dethiobiotin synthetase family. As to quaternary structure, homodimer. It depends on Mg(2+) as a cofactor.

It localises to the cytoplasm. The enzyme catalyses (7R,8S)-7,8-diammoniononanoate + CO2 + ATP = (4R,5S)-dethiobiotin + ADP + phosphate + 3 H(+). It participates in cofactor biosynthesis; biotin biosynthesis; biotin from 7,8-diaminononanoate: step 1/2. Functionally, catalyzes a mechanistically unusual reaction, the ATP-dependent insertion of CO2 between the N7 and N8 nitrogen atoms of 7,8-diaminopelargonic acid (DAPA, also called 7,8-diammoniononanoate) to form a ureido ring. The polypeptide is ATP-dependent dethiobiotin synthetase BioD (Neisseria gonorrhoeae (strain NCCP11945)).